A 161-amino-acid chain; its full sequence is Cytochrome c-type biogenesis protein CcmE (161 aa).

Residues 1–8 are Cytoplasmic-facing; the sequence is MNARRKKR. Residues 9–29 traverse the membrane as a helical; Signal-anchor for type II membrane protein segment; sequence LALATALIGGVAAIASLLLYA. At 30 to 161 the chain is on the periplasmic side; that stretch reads LNSNLNLFYT…DYNAEQKSGY (132 aa). Positions 131 and 135 each coordinate heme.

Belongs to the CcmE/CycJ family.

The protein localises to the cell inner membrane. In terms of biological role, heme chaperone required for the biogenesis of c-type cytochromes. Transiently binds heme delivered by CcmC and transfers the heme to apo-cytochromes in a process facilitated by CcmF and CcmH. In Shewanella woodyi (strain ATCC 51908 / MS32), this protein is Cytochrome c-type biogenesis protein CcmE.